The chain runs to 136 residues: Protein LpdD (136 aa).

This sequence belongs to the CinA family.

Its function is as follows. Probably involved in tannin degradation, however the precise biochemical function in metabolism of gallate is unknown. The sequence is that of Protein LpdD from Lactiplantibacillus plantarum (strain ATCC BAA-793 / NCIMB 8826 / WCFS1) (Lactobacillus plantarum).